The primary structure comprises 500 residues: ATP synthase subunit alpha (500 aa).

169-176 is an ATP binding site; sequence GDRQTGKT.

The protein belongs to the ATPase alpha/beta chains family. As to quaternary structure, F-type ATPases have 2 components, CF(1) - the catalytic core - and CF(0) - the membrane proton channel. CF(1) has five subunits: alpha(3), beta(3), gamma(1), delta(1), epsilon(1). CF(0) has three main subunits: a(1), b(2) and c(9-12). The alpha and beta chains form an alternating ring which encloses part of the gamma chain. CF(1) is attached to CF(0) by a central stalk formed by the gamma and epsilon chains, while a peripheral stalk is formed by the delta and b chains.

Its subcellular location is the cell membrane. It catalyses the reaction ATP + H2O + 4 H(+)(in) = ADP + phosphate + 5 H(+)(out). Produces ATP from ADP in the presence of a proton gradient across the membrane. The alpha chain is a regulatory subunit. In Lactococcus lactis subsp. lactis (strain IL1403) (Streptococcus lactis), this protein is ATP synthase subunit alpha.